Reading from the N-terminus, the 504-residue chain is Ribosomal protein uS12 methylthiotransferase RimO (504 aa).

The 111-residue stretch at 21 to 131 (KRVGFISLGC…VMGHVRELLP (111 aa)) folds into the MTTase N-terminal domain. [4Fe-4S] cluster-binding residues include Cys30, Cys66, Cys95, Cys186, Cys190, and Cys193. The Radical SAM core domain occupies 172–408 (LTPRHYAYVK…MEVAQRISTE (237 aa)). In terms of domain architecture, TRAM spans 411-487 (SEKVGRVMDV…EYDLFGEVIE (77 aa)).

It belongs to the methylthiotransferase family. RimO subfamily. It depends on [4Fe-4S] cluster as a cofactor.

It localises to the cytoplasm. The catalysed reaction is L-aspartate(89)-[ribosomal protein uS12]-hydrogen + (sulfur carrier)-SH + AH2 + 2 S-adenosyl-L-methionine = 3-methylsulfanyl-L-aspartate(89)-[ribosomal protein uS12]-hydrogen + (sulfur carrier)-H + 5'-deoxyadenosine + L-methionine + A + S-adenosyl-L-homocysteine + 2 H(+). Its function is as follows. Catalyzes the methylthiolation of an aspartic acid residue of ribosomal protein uS12. This is Ribosomal protein uS12 methylthiotransferase RimO from Deinococcus radiodurans (strain ATCC 13939 / DSM 20539 / JCM 16871 / CCUG 27074 / LMG 4051 / NBRC 15346 / NCIMB 9279 / VKM B-1422 / R1).